Reading from the N-terminus, the 250-residue chain is Triosephosphate isomerase (250 aa).

Substrate is bound at residue 9–11 (NWK). The active-site Electrophile is histidine 96. Catalysis depends on glutamate 168, which acts as the Proton acceptor. Substrate-binding positions include glycine 174, serine 216, and 237–238 (GG).

Belongs to the triosephosphate isomerase family. In terms of assembly, homodimer.

The protein localises to the cytoplasm. The enzyme catalyses D-glyceraldehyde 3-phosphate = dihydroxyacetone phosphate. The protein operates within carbohydrate biosynthesis; gluconeogenesis. It functions in the pathway carbohydrate degradation; glycolysis; D-glyceraldehyde 3-phosphate from glycerone phosphate: step 1/1. Functionally, involved in the gluconeogenesis. Catalyzes stereospecifically the conversion of dihydroxyacetone phosphate (DHAP) to D-glyceraldehyde-3-phosphate (G3P). The protein is Triosephosphate isomerase of Leptospira interrogans serogroup Icterohaemorrhagiae serovar Lai (strain 56601).